Reading from the N-terminus, the 338-residue chain is 1-aminocyclopropane-1-carboxylate deaminase (338 aa).

An N6-(pyridoxal phosphate)lysine modification is found at Lys51. Ser78 serves as the catalytic Nucleophile.

The protein belongs to the ACC deaminase/D-cysteine desulfhydrase family. As to quaternary structure, homotrimer. The cofactor is pyridoxal 5'-phosphate.

The enzyme catalyses 1-aminocyclopropane-1-carboxylate + H2O = 2-oxobutanoate + NH4(+). In terms of biological role, catalyzes a cyclopropane ring-opening reaction, the irreversible conversion of 1-aminocyclopropane-1-carboxylate (ACC) to ammonia and alpha-ketobutyrate. Allows growth on ACC as a nitrogen source. The sequence is that of 1-aminocyclopropane-1-carboxylate deaminase from Burkholderia multivorans (strain ATCC 17616 / 249).